Reading from the N-terminus, the 306-residue chain is Oxygen-dependent coproporphyrinogen-III oxidase (306 aa).

Position 94 (serine 94) interacts with substrate. 2 residues coordinate a divalent metal cation: histidine 98 and histidine 108. The active-site Proton donor is the histidine 108. 110–112 (NVR) provides a ligand contact to substrate. Histidine 147 and histidine 177 together coordinate a divalent metal cation. An important for dimerization region spans residues 242–277 (YVEFNLVYDRGTLFGLQTGGRTESILMSMPPLVRWQ). 260–262 (GGR) contacts substrate.

The protein belongs to the aerobic coproporphyrinogen-III oxidase family. In terms of assembly, homodimer. A divalent metal cation is required as a cofactor.

It localises to the cytoplasm. It catalyses the reaction coproporphyrinogen III + O2 + 2 H(+) = protoporphyrinogen IX + 2 CO2 + 2 H2O. It participates in porphyrin-containing compound metabolism; protoporphyrin-IX biosynthesis; protoporphyrinogen-IX from coproporphyrinogen-III (O2 route): step 1/1. Involved in the heme biosynthesis. Catalyzes the aerobic oxidative decarboxylation of propionate groups of rings A and B of coproporphyrinogen-III to yield the vinyl groups in protoporphyrinogen-IX. The chain is Oxygen-dependent coproporphyrinogen-III oxidase from Shewanella sediminis (strain HAW-EB3).